The primary structure comprises 674 residues: DNA ligase (674 aa).

Residues 42-46 (DNVYD), 91-92 (SM), and Glu121 each bind NAD(+). The active-site N6-AMP-lysine intermediate is Lys123. 4 residues coordinate NAD(+): Arg144, Glu178, Lys294, and Lys318. Positions 412, 415, 430, and 435 each coordinate Zn(2+). The 79-residue stretch at 596–674 (VKDSFVAGKT…ETELLANLKD (79 aa)) folds into the BRCT domain.

It belongs to the NAD-dependent DNA ligase family. LigA subfamily. Mg(2+) serves as cofactor. The cofactor is Mn(2+).

It carries out the reaction NAD(+) + (deoxyribonucleotide)n-3'-hydroxyl + 5'-phospho-(deoxyribonucleotide)m = (deoxyribonucleotide)n+m + AMP + beta-nicotinamide D-nucleotide.. Functionally, DNA ligase that catalyzes the formation of phosphodiester linkages between 5'-phosphoryl and 3'-hydroxyl groups in double-stranded DNA using NAD as a coenzyme and as the energy source for the reaction. It is essential for DNA replication and repair of damaged DNA. The polypeptide is DNA ligase (Lacticaseibacillus paracasei (strain ATCC 334 / BCRC 17002 / CCUG 31169 / CIP 107868 / KCTC 3260 / NRRL B-441) (Lactobacillus paracasei)).